We begin with the raw amino-acid sequence, 299 residues long: ATP phosphoribosyltransferase (299 aa).

This sequence belongs to the ATP phosphoribosyltransferase family. Long subfamily. It depends on Mg(2+) as a cofactor.

The protein resides in the cytoplasm. The enzyme catalyses 1-(5-phospho-beta-D-ribosyl)-ATP + diphosphate = 5-phospho-alpha-D-ribose 1-diphosphate + ATP. The protein operates within amino-acid biosynthesis; L-histidine biosynthesis; L-histidine from 5-phospho-alpha-D-ribose 1-diphosphate: step 1/9. Feedback inhibited by histidine. In terms of biological role, catalyzes the condensation of ATP and 5-phosphoribose 1-diphosphate to form N'-(5'-phosphoribosyl)-ATP (PR-ATP). Has a crucial role in the pathway because the rate of histidine biosynthesis seems to be controlled primarily by regulation of HisG enzymatic activity. The sequence is that of ATP phosphoribosyltransferase from Campylobacter jejuni subsp. jejuni serotype O:6 (strain 81116 / NCTC 11828).